Here is a 493-residue protein sequence, read N- to C-terminus: Cobyric acid synthase (493 aa).

The 168-residue stretch at 260 to 427 (RLSVAAIRLP…RHGYLQDDPA (168 aa)) folds into the GATase cobBQ-type domain. Residue His-419 is part of the active site.

It belongs to the CobB/CobQ family. CobQ subfamily.

It functions in the pathway cofactor biosynthesis; adenosylcobalamin biosynthesis. Functionally, catalyzes amidations at positions B, D, E, and G on adenosylcobyrinic A,C-diamide. NH(2) groups are provided by glutamine, and one molecule of ATP is hydrogenolyzed for each amidation. The protein is Cobyric acid synthase of Corynebacterium efficiens (strain DSM 44549 / YS-314 / AJ 12310 / JCM 11189 / NBRC 100395).